The primary structure comprises 245 residues: Geranylgeranylglyceryl phosphate synthase (245 aa).

Positions 20 and 50 each coordinate Mg(2+). Sn-glycerol 1-phosphate-binding positions include 169–175 (YLEAGSG), 202–203 (GG), and 224–225 (GT).

Belongs to the GGGP/HepGP synthase family. Group II subfamily. Requires Mg(2+) as cofactor.

Its subcellular location is the cytoplasm. It carries out the reaction sn-glycerol 1-phosphate + (2E,6E,10E)-geranylgeranyl diphosphate = sn-3-O-(geranylgeranyl)glycerol 1-phosphate + diphosphate. Its pathway is membrane lipid metabolism; glycerophospholipid metabolism. Its function is as follows. Prenyltransferase that catalyzes the transfer of the geranylgeranyl moiety of geranylgeranyl diphosphate (GGPP) to the C3 hydroxyl of sn-glycerol-1-phosphate (G1P). This reaction is the first ether-bond-formation step in the biosynthesis of archaeal membrane lipids. In Ignicoccus hospitalis (strain KIN4/I / DSM 18386 / JCM 14125), this protein is Geranylgeranylglyceryl phosphate synthase.